A 357-amino-acid polypeptide reads, in one-letter code: Cholinesterase 1 (357 aa).

Ser-112 (acyl-ester intermediate) is an active-site residue. Cys-166 and Cys-179 are joined by a disulfide. Active-site charge relay system residues include Glu-244 and His-357.

It belongs to the type-B carboxylesterase/lipase family.

It catalyses the reaction an acylcholine + H2O = a carboxylate + choline + H(+). In Branchiostoma lanceolatum (Common lancelet), this protein is Cholinesterase 1 (CHE1).